A 251-amino-acid polypeptide reads, in one-letter code: NADPH-dependent oxidoreductase (251 aa).

This sequence belongs to the flavin oxidoreductase frp family. Requires FMN as cofactor.

Its function is as follows. Reduces FMN, organic nitro compounds and disulfide DTNB. Involved in maintenance of the cellular redox state and the disulfide stress response. In Staphylococcus aureus (strain MRSA252), this protein is NADPH-dependent oxidoreductase (nfrA).